The following is a 383-amino-acid chain: Glutaminyl-peptide cyclotransferase-like protein (383 aa).

A disordered region spans residues 1–25 (MPSGGRGRPRLQVGERSLLERPSPP). Residues 35–57 (LLPQLLLALTVASVFYTIWRIWH) form a helical membrane-spanning segment. Cys-168 and Cys-192 are disulfide-bonded. Position 187 (Asp-187) interacts with Zn(2+). Residue Glu-226 is the Proton acceptor of the active site. Glu-227 contributes to the Zn(2+) binding site. Residue Asp-270 is the Proton acceptor of the active site. His-352 provides a ligand contact to Zn(2+).

It belongs to the glutaminyl-peptide cyclotransferase family.

Its subcellular location is the golgi apparatus membrane. The enzyme catalyses N-terminal L-glutaminyl-[peptide] = N-terminal 5-oxo-L-prolyl-[peptide] + NH4(+). Functionally, responsible for the biosynthesis of pyroglutamyl peptides. The protein is Glutaminyl-peptide cyclotransferase-like protein (QPCTL) of Bos taurus (Bovine).